The following is a 431-amino-acid chain: Enolase (431 aa).

Residue glutamine 166 coordinates (2R)-2-phosphoglycerate. Glutamate 208 serves as the catalytic Proton donor. The Mg(2+) site is built by aspartate 245, glutamate 288, and aspartate 315. (2R)-2-phosphoglycerate-binding residues include lysine 340, arginine 369, serine 370, and lysine 391. Residue lysine 340 is the Proton acceptor of the active site.

This sequence belongs to the enolase family. The cofactor is Mg(2+).

It localises to the cytoplasm. Its subcellular location is the secreted. The protein resides in the cell surface. The enzyme catalyses (2R)-2-phosphoglycerate = phosphoenolpyruvate + H2O. The protein operates within carbohydrate degradation; glycolysis; pyruvate from D-glyceraldehyde 3-phosphate: step 4/5. Its function is as follows. Catalyzes the reversible conversion of 2-phosphoglycerate (2-PG) into phosphoenolpyruvate (PEP). It is essential for the degradation of carbohydrates via glycolysis. The polypeptide is Enolase (Clostridium acetobutylicum (strain ATCC 824 / DSM 792 / JCM 1419 / IAM 19013 / LMG 5710 / NBRC 13948 / NRRL B-527 / VKM B-1787 / 2291 / W)).